Consider the following 404-residue polypeptide: Protrudin (404 aa).

The disordered stretch occupies residues 1 to 25 (MQSSDRDLSGPEASPSVMPEVLSEC). The Cytoplasmic portion of the chain corresponds to 1-63 (MQSSDRDLSG…LKDAGDGVRY (63 aa)). The tract at residues 1 to 92 (MQSSDRDLSG…LFLTLNEGAW (92 aa)) is sufficient for homooligomerization. The segment at 1–205 (MQSSDRDLSG…LYLLPLCWVL (205 aa)) is sufficient for localization to endoplasmic reticulum tubular network and for interactions with REEP1, REEP5, ATL1, ATL2, ATL3 and SPAST. Positions 51 to 64 (LEPLKDAGDGVRYL) are necessary for interaction with RAB11A and function in neurite outgrowth. A helical membrane pass occupies residues 64 to 85 (LLRWQMPLCSLLTCLGLNILFL). At 86–90 (TLNEG) the chain is on the lumenal side. Residues 91–109 (AWYSVGALIISVPALLGYL) form a helical membrane-spanning segment. Residues 110 to 187 (QEVCRAQLPE…NPVVSSQFYG (78 aa)) are Cytoplasmic-facing. Residues 188 to 208 (ALLGMVCMLYLLPLCWVLALL) constitute an intramembrane region (helical). Topologically, residues 209–404 (NSTLFLGNGE…CASCNQTLSK (196 aa)) are cytoplasmic. Positions 259–299 (DSTPAPTPTEDLTPGSVEEAEEAEPDEEFKDAIEEDDEGTP) are disordered. The necessary for interaction with KIF5A stretch occupies residues 271–354 (TPGSVEEAEE…GCAATFSVLK (84 aa)). Positions 276 to 299 (EEAEEAEPDEEFKDAIEEDDEGTP) are enriched in acidic residues. Residues 286–292 (EFKDAIE) form a necessary for interaction with VAPA region. The segment at 337-403 (TNNFGNCAGC…VCASCNQTLS (67 aa)) adopts an FYVE-type zinc-finger fold. Zn(2+)-binding residues include C343, C346, C359, C362, C367, C370, C395, and C398.

Can form homooligomers (monomers, dimers and tetramers). Interacts with FKBP8; may negatively regulate ZFYVE27 phosphorylation. Interacts with VAPA (via MSP domain); may regulate ZFYVE27 retention in the endoplasmic reticulum and its function in cell projections formation. Interacts with VAPB (via MSP domain). Interacts with RAB11A (GDP-bound form); regulates RAB11A. Interacts with RAB11B (GDP-bound form), REEP1, REEP5, ATL1, ATL2, ATL3, SPAST, SURF4, KIF5A, KIF5B, KIF5C and RTN3. Phosphorylated. Phosphorylation is induced by NGF through the MAPK/ERK pathway and modulates interaction with RAB11A.

It localises to the recycling endosome membrane. Its subcellular location is the endoplasmic reticulum membrane. The protein resides in the cell projection. It is found in the growth cone membrane. In terms of biological role, key regulator of RAB11-dependent vesicular trafficking during neurite extension through polarized membrane transport. Promotes axonal elongation and contributes to the establishment of neuronal cell polarity. Involved in nerve growth factor-induced neurite formation in VAPA-dependent manner. Contributes to both the formation and stabilization of the tubular ER network. Involved in ER morphogenesis by regulating the sheet-to-tubule balance and possibly the density of tubule interconnections. Acts as an adapter protein that facilitates the interaction of KIF5A with VAPA, VAPB, SURF4, RAB11A, RAB11B and RTN3 and the ZFYVE27-KIF5A complex contributes to the transport of these proteins in neurons. Can induce formation of neurite-like membrane protrusions in non-neuronal cells in a KIF5A/B-dependent manner. In Rattus norvegicus (Rat), this protein is Protrudin (Zfyve27).